We begin with the raw amino-acid sequence, 283 residues long: DNA repair protein RecO (283 aa).

It belongs to the RecO family.

Its function is as follows. Involved in DNA repair and RecF pathway recombination. This chain is DNA repair protein RecO, found in Gloeothece citriformis (strain PCC 7424) (Cyanothece sp. (strain PCC 7424)).